A 636-amino-acid polypeptide reads, in one-letter code: Chaperone protein DnaK (636 aa).

At T197 the chain carries Phosphothreonine; by autocatalysis. A compositionally biased stretch (low complexity) spans 596 to 607; that stretch reads LYQQAQEQQQSG. Positions 596 to 636 are disordered; that stretch reads LYQQAQEQQQSGSSGGSSDEDVVEDAEIVDEEDEEKRDDNR. Residues 613–636 are compositionally biased toward acidic residues; the sequence is SDEDVVEDAEIVDEEDEEKRDDNR.

The protein belongs to the heat shock protein 70 family.

Its function is as follows. Acts as a chaperone. This Rubrobacter xylanophilus (strain DSM 9941 / JCM 11954 / NBRC 16129 / PRD-1) protein is Chaperone protein DnaK.